Here is an 880-residue protein sequence, read N- to C-terminus: MKQLTGAQIRQMFLDFFKEKGHAIEPSASLVPHEDPSLLWINSGVATLKKYFDGRVIPQNPRITNAQKSIRTNDIENVGKTARHHTFFEMLGNFSIGDYFKEEAITWAWEFLTSDKWIGFDKELLSVTIHPEDEEAFTIWHEKIGVPKERIIRLEENFWDIGEGPSGPNTEIFYDRGEAYGNDPSDPELYPGGENERYLEVWNLVFSQFNHNPDGSYTPLPKKNIDTGMGLERMTSIVQNVPTNFDTDLFMPMIGATESISGEKYRSGDAEKDMAFKVIADHIRTVTFAVGDGALPSNEGRGYVLRRLLRRAVRYAKKLNMNRPFMYELVPVVGEVMKDFYPEVLEKKDFIAKVVKNEEERFHETLHDGEAILAEVIAKAKEEKTTVISGVDAFRLYDTYGFPVELTEEYAEEAGMTVDHAGFEAEMEKQRERARAARQDVDSMQVQGGVLGEIKVASEFVGYGTVATESNVVALVKNGEYTDSLQAGEEGQLMLDVTPFYAESGGQIADSGYLLTDGVKVLVKDVQKAPNGQNLHKVVVEEGVLTKDATVKAVIDTKNRSSIVKNHTATHLLHQALKDVLGTHVNQAGSLVTAERLRFDFSHFGQVQADELEKIERIVNEKIWESIDVEISQKAIEEAKEMGAMALFGEKYGDVVRVVQVGDYSLELCGGCHVDNTASIGIFKIVAESGIGAGTRRIEAVTGKAAYELMNDQVSLLKEAAGKMKTNPKDILTRVDGLFAEVKQLQKENESLAAKLSNIEAGNLTDAVVSVDGINVLATKVNVADMNNLRTMMDDLKNKLESAVIVLAAVNDDKVNILAGVTKDLVGQGYHAGKLVKEVASRCGGGGGGRPDMAQAGGKNPAQVDEALAFVQEYVKSVSK.

The Zn(2+) site is built by histidine 567, histidine 571, cysteine 669, and histidine 673.

This sequence belongs to the class-II aminoacyl-tRNA synthetase family. The cofactor is Zn(2+).

It is found in the cytoplasm. The catalysed reaction is tRNA(Ala) + L-alanine + ATP = L-alanyl-tRNA(Ala) + AMP + diphosphate. Functionally, catalyzes the attachment of alanine to tRNA(Ala) in a two-step reaction: alanine is first activated by ATP to form Ala-AMP and then transferred to the acceptor end of tRNA(Ala). Also edits incorrectly charged Ser-tRNA(Ala) and Gly-tRNA(Ala) via its editing domain. The polypeptide is Alanine--tRNA ligase (Bacillus cytotoxicus (strain DSM 22905 / CIP 110041 / 391-98 / NVH 391-98)).